The chain runs to 531 residues: SWI/SNF-related matrix-associated actin-dependent regulator of chromatin subfamily D member 2 (531 aa).

The segment at 20-85 (AVAAALGAPP…MSPGSRMPMA (66 aa)) is disordered. Low complexity predominate over residues 34-45 (PGMLPSPALRGP). Asymmetric dimethylarginine occurs at positions 81 and 104. At Ser-203 the chain carries Phosphoserine. Residues 205-226 (SKADGDNAGTAGTPGGTPAADK) are disordered. Over residues 210 to 225 (DNAGTAGTPGGTPAAD) the composition is skewed to low complexity. The residue at position 217 (Thr-217) is a Phosphothreonine. Residue Lys-226 forms a Glycyl lysine isopeptide (Lys-Gly) (interchain with G-Cter in SUMO2) linkage. The SWIB/MDM2 domain occupies 306-383 (HQPPQYKLDP…PMKLAGLLQH (78 aa)).

This sequence belongs to the SMARCD family. Component of the multiprotein chromatin-remodeling complexes SWI/SNF: SWI/SNF-A (BAF), SWI/SNF-B (PBAF) and related complexes. The canonical complex contains a catalytic subunit (either SMARCA4/BRG1/BAF190A or SMARCA2/BRM/BAF190B), and at least SMARCE1, ACTL6A/BAF53, SMARCC1/BAF155, SMARCC2/BAF170, and SMARCB1/SNF5/BAF47. Other subunits specific to each of the complexes may also be present permitting several possible combinations developmentally and tissue specific. Component of the BAF complex, which includes at least actin (ACTB), ARID1A/BAF250A, ARID1B/BAF250B, SMARCA2/BRM, SMARCA4/BRG1, ACTL6A/BAF53, ACTL6B/BAF53B, SMARCE1/BAF57, SMARCC1/BAF155, SMARCC2/BAF170, SMARCB1/SNF5/INI1, and one or more SMARCD1/BAF60A, SMARCD2/BAF60B, or SMARCD3/BAF60C. In muscle cells, the BAF complex also contains DPF3. Component of the SWI/SNF-B (PBAF) chromatin remodeling complex, at least composed of SMARCA4/BRG1, SMARCB1/BAF47/SNF5, ACTL6A/BAF53A or ACTL6B/BAF53B, SMARCE1/BAF57, SMARCD1/BAF60A, SMARCD2/BAF60B, perhaps SMARCD3/BAF60C, SMARCC1/BAF155, SMARCC2/BAF170, PBRM1/BAF180, ARID2/BAF200 and actin (ACTB). Interacts with UNKL. Interacts with CEBPE. Ubiquitinated through a signaling process involving RAC1 and the RING finger protein UNKL.

The protein localises to the nucleus. In terms of biological role, involved in transcriptional activation and repression of select genes by chromatin remodeling (alteration of DNA-nucleosome topology). Component of SWI/SNF chromatin remodeling complexes that carry out key enzymatic activities, changing chromatin structure by altering DNA-histone contacts within a nucleosome in an ATP-dependent manner. Critical regulator of myeloid differentiation, controlling granulocytopoiesis and the expression of genes involved in neutrophil granule formation. The sequence is that of SWI/SNF-related matrix-associated actin-dependent regulator of chromatin subfamily D member 2 (Smarcd2) from Mus musculus (Mouse).